The following is a 179-amino-acid chain: Large ribosomal subunit protein uL6 (179 aa).

This sequence belongs to the universal ribosomal protein uL6 family. Part of the 50S ribosomal subunit.

This protein binds to the 23S rRNA, and is important in its secondary structure. It is located near the subunit interface in the base of the L7/L12 stalk, and near the tRNA binding site of the peptidyltransferase center. This is Large ribosomal subunit protein uL6 from Clostridium novyi (strain NT).